We begin with the raw amino-acid sequence, 122 residues long: Large ribosomal subunit protein bL12 (122 aa).

Belongs to the bacterial ribosomal protein bL12 family. As to quaternary structure, homodimer. Part of the ribosomal stalk of the 50S ribosomal subunit. Forms a multimeric L10(L12)X complex, where L10 forms an elongated spine to which 2 to 4 L12 dimers bind in a sequential fashion. Binds GTP-bound translation factors.

Its function is as follows. Forms part of the ribosomal stalk which helps the ribosome interact with GTP-bound translation factors. Is thus essential for accurate translation. This Buchnera aphidicola subsp. Cinara cedri (strain Cc) protein is Large ribosomal subunit protein bL12.